Reading from the N-terminus, the 423-residue chain is Adenylosuccinate synthetase (423 aa).

GTP-binding positions include 12-18 (GDEGKGK) and 40-42 (GHT). D13 (proton acceptor) is an active-site residue. D13 and G40 together coordinate Mg(2+). Residues 13–16 (DEGK), 38–41 (NAGH), T128, R142, Q223, T238, and R302 contribute to the IMP site. H41 serves as the catalytic Proton donor. 298–304 (TTTGRPR) is a binding site for substrate. GTP-binding positions include R304, 330 to 332 (RLD), and 412 to 414 (CIG).

The protein belongs to the adenylosuccinate synthetase family. As to quaternary structure, homodimer. Mg(2+) is required as a cofactor.

The protein localises to the cytoplasm. The enzyme catalyses IMP + L-aspartate + GTP = N(6)-(1,2-dicarboxyethyl)-AMP + GDP + phosphate + 2 H(+). It participates in purine metabolism; AMP biosynthesis via de novo pathway; AMP from IMP: step 1/2. Its function is as follows. Plays an important role in the de novo pathway of purine nucleotide biosynthesis. Catalyzes the first committed step in the biosynthesis of AMP from IMP. The polypeptide is Adenylosuccinate synthetase (Dehalococcoides mccartyi (strain ATCC BAA-2100 / JCM 16839 / KCTC 5957 / BAV1)).